Consider the following 418-residue polypeptide: Phosphoglycerate kinase (418 aa).

Residues V24, D25, F26, N27, R40, S63, H64, G66, R67, L122, R123, H169, and R170 each coordinate (2R)-3-phosphoglycerate. G213 is a binding site for ADP. Position 213 (G213) interacts with CDP. Residues A214 and K215 each contribute to the AMP site. A214 is a binding site for ATP. A214 provides a ligand contact to Mg(2+). Mg(2+) is bound by residues A217 and D218. D218 provides a ligand contact to CDP. AMP is bound at residue K219. ATP is bound at residue K219. G237 is an ADP binding site. G237 provides a ligand contact to CDP. Positions 238 and 312 each coordinate AMP. The ATP site is built by G238 and G312. The CDP site is built by G337 and F342. ADP is bound at residue F342. E343 is an AMP binding site. Residues E343, D374, and T375 each contribute to the ATP site. D374 serves as a coordination point for Mg(2+).

It belongs to the phosphoglycerate kinase family. As to quaternary structure, monomer. Mg(2+) serves as cofactor.

It carries out the reaction (2R)-3-phosphoglycerate + ATP = (2R)-3-phospho-glyceroyl phosphate + ADP. It participates in carbohydrate degradation; glycolysis; pyruvate from D-glyceraldehyde 3-phosphate: step 2/5. The chain is Phosphoglycerate kinase (PGK) from Euplotes crassus.